A 396-amino-acid chain; its full sequence is MSKLKLNPYFGEYGGMYVPQILVPALKQLETAFVEAQEDDDFKAEFTDLLKNYAGRPTALTLTRNLSPNPMVKIYLKREDLLHGGAHKTNQVLGQALLAKRMGKKEIIAETGAGQHGVATALACALLGLKCKVYMGAKDVARQSPNVFRMRLMGAEVIPVTSGSATLKDACNEAMRDWSGSYEKAHYLLGTAAGPHPFPTIVREFQRIIGEETKKQMLEREGRLPDAVIACVGGGSNAIGMFADFIDEPSVELIGVEPAGKGIDTPMHGAPLKHGKTGIFFGMKAPLMQDREGQIEESYSISAGLDFPSVGPQHAHLNATGRARYESATDDEALEAFQQLARCEGIIPALESAHAIAYAVKMARECTKETILVVNLSGRGDKDIFTVSDILNGKEE.

At Lys-88 the chain carries N6-(pyridoxal phosphate)lysine.

This sequence belongs to the TrpB family. Tetramer of two alpha and two beta chains. Requires pyridoxal 5'-phosphate as cofactor.

It carries out the reaction (1S,2R)-1-C-(indol-3-yl)glycerol 3-phosphate + L-serine = D-glyceraldehyde 3-phosphate + L-tryptophan + H2O. The protein operates within amino-acid biosynthesis; L-tryptophan biosynthesis; L-tryptophan from chorismate: step 5/5. The beta subunit is responsible for the synthesis of L-tryptophan from indole and L-serine. The polypeptide is Tryptophan synthase beta chain (Shewanella baltica (strain OS195)).